The primary structure comprises 372 residues: Alginate lyase (372 aa).

The signal sequence occupies residues 1–22 (MKTRLALPCLLGSLLLSSAVHA). Substrate-binding positions include 61–62 (SK), 134–135 (HT), and Tyr-252.

It belongs to the polysaccharide lyase 5 family.

The protein resides in the periplasm. The catalysed reaction is Eliminative cleavage of alginate to give oligosaccharides with 4-deoxy-alpha-L-erythro-hex-4-enuronosyl groups at their non-reducing ends and beta-D-mannuronate at their reducing end.. Its activity is regulated as follows. Monovalent cations such as potassium and sodium enhance activity, as well as a combined action of these cations with magnesium. However, other cations like calcium, cobalt, manganese and zinc, or the presence of EDTA, do not affect the enzymatic activity. Its function is as follows. Catalyzes the depolymerization of alginate by cleaving the beta-1,4 glycosidic bond between two adjacent sugar residues via a beta-elimination mechanism. Degrades deacetylated polymannuronate alginate more efficiently than non-deacetylated polyM. Is able to degrade its own alginate, but at a lower efficiency than that produced from M.pyriferia and P.aeruginosa. May serve to degrade mislocalized alginate that is trapped in the periplasmic space. The polypeptide is Alginate lyase (Azotobacter chroococcum mcd 1).